A 355-amino-acid polypeptide reads, in one-letter code: Mitochondrial import inner membrane translocase subunit TIM50 (355 aa).

The transit peptide at 1–44 directs the protein to the mitochondrion; it reads MAASAAVFLRLRSGLRQGARGLCARLATPPPRAPDQAAEIGSRA. The interval 25–61 is disordered; that stretch reads RLATPPPRAPDQAAEIGSRAGTKAQTQGPQQQRSSEG. The Mitochondrial matrix segment spans residues 45–67; it reads GTKAQTQGPQQQRSSEGPSYAKK. Over residues 47–61 the composition is skewed to polar residues; sequence KAQTQGPQQQRSSEG. A helical membrane pass occupies residues 68–88; it reads VALWLARLLGAGGTVSVIYIF. At 89–355 the chain is on the mitochondrial intermembrane side; that stretch reads GNNAVDENGA…SRLWPRSKQP (267 aa). The FCP1 homology domain occupies 145 to 288; the sequence is YYQPPYTLVL…LDLSAFLKTI (144 aa). Ser-343 bears the Phosphoserine mark.

This sequence belongs to the TIM50 family. Component of the TIM23 complex at least composed of TIMM23, TIMM17 (TIMM17A or TIMM17B) and TIMM50; within this complex, directly interacts with TIMM23. The complex interacts with the TIMM44 component of the PAM complex and with DNAJC15.

The protein localises to the mitochondrion inner membrane. Functionally, essential component of the TIM23 complex, a complex that mediates the translocation of transit peptide-containing proteins across the mitochondrial inner membrane. Has some phosphatase activity in vitro; however such activity may not be relevant in vivo. In Bos taurus (Bovine), this protein is Mitochondrial import inner membrane translocase subunit TIM50 (TIMM50).